A 170-amino-acid chain; its full sequence is Ribosome maturation factor RimM (170 aa).

A PRC barrel domain is found at 97 to 170 (KPDEYYWVDL…LVVVDWDPEF (74 aa)).

This sequence belongs to the RimM family. In terms of assembly, binds ribosomal protein uS19.

It localises to the cytoplasm. Its function is as follows. An accessory protein needed during the final step in the assembly of 30S ribosomal subunit, possibly for assembly of the head region. Essential for efficient processing of 16S rRNA. May be needed both before and after RbfA during the maturation of 16S rRNA. It has affinity for free ribosomal 30S subunits but not for 70S ribosomes. This Stenotrophomonas maltophilia (strain K279a) protein is Ribosome maturation factor RimM.